A 295-amino-acid chain; its full sequence is Trimeric intracellular cation channel type 1B.1 (295 aa).

Topologically, residues 1 to 27 (MVVPESFQLDQEILLDAGAQLHRLKMY) are lumenal. Residues 28–45 (PYFDVAHYLLMIIEVRDD) traverse the membrane as a helical segment. Topologically, residues 46 to 56 (LGSAASIFSRK) are cytoplasmic. Residues 57–80 (HPLSCWLSSMLMCFADAFLANFLL) traverse the membrane as a discontinuously helical segment. The Lumenal portion of the chain corresponds to 81–89 (GEPVIAPFK). A helical membrane pass occupies residues 90-107 (RHDDIILATIIWYLVFYA). The Cytoplasmic portion of the chain corresponds to 108–119 (PFDGIYKIAKIT). A helical membrane pass occupies residues 120 to 148 (PVKCVLAVMKEVKRAYKVSHGVSHAAKLY). A 1,2-diacyl-sn-glycero-3-phospho-(1D-myo-inositol-4,5-bisphosphate)-binding residues include Lys-129 and Arg-133. The Lumenal portion of the chain corresponds to 149–150 (PN). The chain crosses the membrane as a discontinuously helical span at residues 151-177 (SYIVQVLVGTAKGAGSGIVRTLEQLVR). Ser-166 provides a ligand contact to a 1,2-diacyl-sn-glycero-3-phospho-(1D-myo-inositol-4,5-bisphosphate). At 178-188 (GVWLPTHNELL) the chain is on the cytoplasmic side. The chain crosses the membrane as a helical span at residues 189–210 (RPSFATKACVVAASVLALEKSG). Over 211-215 (TYLTA) the chain is Lumenal. A helical transmembrane segment spans residues 216–239 (PHDLVYLVIVGFFVYFKLSAVILH). The Cytoplasmic portion of the chain corresponds to 240 to 295 (VTDPFAPIENLFCAIFMGGIWDAVSRALAASRDRRAAGAHSNENGSSISTPEKKDQ). The disordered stretch occupies residues 274 to 295 (RAAGAHSNENGSSISTPEKKDQ).

The protein belongs to the TMEM38 family. As to quaternary structure, homotrimer; trimerization probably requires binding to phosphatidylinositol 4,5-bisphosphate (PIP2).

Its subcellular location is the endoplasmic reticulum membrane. In terms of biological role, potassium channel that mediates transmembrane potassium transport. Might be required for maintenance of rapid intracellular calcium release. May act as a counter-ion channel that functions in synchronization with calcium release from intracellular stores. Binds phosphatidylinositol 4,5-bisphosphate (PIP2). This chain is Trimeric intracellular cation channel type 1B.1, found in Caenorhabditis elegans.